The chain runs to 180 residues: Protein GrpE (180 aa).

Belongs to the GrpE family. As to quaternary structure, homodimer.

The protein resides in the cytoplasm. Functionally, participates actively in the response to hyperosmotic and heat shock by preventing the aggregation of stress-denatured proteins, in association with DnaK and GrpE. It is the nucleotide exchange factor for DnaK and may function as a thermosensor. Unfolded proteins bind initially to DnaJ; upon interaction with the DnaJ-bound protein, DnaK hydrolyzes its bound ATP, resulting in the formation of a stable complex. GrpE releases ADP from DnaK; ATP binding to DnaK triggers the release of the substrate protein, thus completing the reaction cycle. Several rounds of ATP-dependent interactions between DnaJ, DnaK and GrpE are required for fully efficient folding. The polypeptide is Protein GrpE (Picrophilus torridus (strain ATCC 700027 / DSM 9790 / JCM 10055 / NBRC 100828 / KAW 2/3)).